Reading from the N-terminus, the 201-residue chain is Cardiotrophin-1 (201 aa).

It belongs to the IL-6 superfamily. In terms of tissue distribution, highly expressed in heart, skeletal muscle, prostate and ovary. Lower levels in lung, kidney, pancreas, thymus, testis and small intestine. Little or no expression in brain, placenta, liver, spleen, colon or peripheral blood leukocytes.

Its subcellular location is the secreted. Its function is as follows. Induces cardiac myocyte hypertrophy in vitro. Binds to and activates the ILST/gp130 receptor. This Homo sapiens (Human) protein is Cardiotrophin-1 (CTF1).